The sequence spans 81 residues: CLAVATA3/ESR (CLE)-related protein 6 (81 aa).

A signal peptide spans 1–26; that stretch reads MANLILKQSLIILLIIYSTPILSSQA. Residues proline 73 and proline 76 each carry the hydroxyproline modification. A glycan (O-linked (Ara...) hydroxyproline) is linked at proline 76.

The protein belongs to the CLV3/ESR signal peptide family. The O-glycosylation (arabinosylation) of the hydroxyproline Pro-76 enhances binding affinity of the CLE6p peptide for its receptor. Mostly expressed in roots, seedlings, stems and flowers, and, to a lower extent, in apex and siliques.

It is found in the secreted. The protein localises to the extracellular space. Its function is as follows. Extracellular signal peptide that regulates cell fate. The polypeptide is CLAVATA3/ESR (CLE)-related protein 6 (Arabidopsis thaliana (Mouse-ear cress)).